Reading from the N-terminus, the 291-residue chain is Formamidopyrimidine-DNA glycosylase (291 aa).

The active-site Schiff-base intermediate with DNA is proline 2. Glutamate 3 acts as the Proton donor in catalysis. The active-site Proton donor; for beta-elimination activity is lysine 58. The DNA site is built by histidine 100, arginine 123, and lysine 166. The FPG-type zinc finger occupies 257–291 (SVYGREGKECSRCGMHIVRIVQSGRSSFYCPQCQK). Catalysis depends on arginine 281, which acts as the Proton donor; for delta-elimination activity.

The protein belongs to the FPG family. In terms of assembly, monomer. Requires Zn(2+) as cofactor.

The enzyme catalyses Hydrolysis of DNA containing ring-opened 7-methylguanine residues, releasing 2,6-diamino-4-hydroxy-5-(N-methyl)formamidopyrimidine.. It carries out the reaction 2'-deoxyribonucleotide-(2'-deoxyribose 5'-phosphate)-2'-deoxyribonucleotide-DNA = a 3'-end 2'-deoxyribonucleotide-(2,3-dehydro-2,3-deoxyribose 5'-phosphate)-DNA + a 5'-end 5'-phospho-2'-deoxyribonucleoside-DNA + H(+). In terms of biological role, involved in base excision repair of DNA damaged by oxidation or by mutagenic agents. Acts as a DNA glycosylase that recognizes and removes damaged bases. Has a preference for oxidized purines, such as 7,8-dihydro-8-oxoguanine (8-oxoG). Has AP (apurinic/apyrimidinic) lyase activity and introduces nicks in the DNA strand. Cleaves the DNA backbone by beta-delta elimination to generate a single-strand break at the site of the removed base with both 3'- and 5'-phosphates. The chain is Formamidopyrimidine-DNA glycosylase from Bartonella bacilliformis (strain ATCC 35685 / KC583 / Herrer 020/F12,63).